The following is a 49-amino-acid chain: Osteocalcin (49 aa).

One can recognise a Gla domain in the interval Tyr1–Gly47. Pro9 carries the 4-hydroxyproline modification. Ca(2+) is bound by residues Glu17, Glu21, Glu24, and Asp30. 3 positions are modified to 4-carboxyglutamate: Glu17, Glu21, and Glu24. A disulfide bridge links Cys23 with Cys29.

This sequence belongs to the osteocalcin/matrix Gla protein family. Gamma-carboxyglutamate residues are formed by vitamin K dependent carboxylation by GGCX. These residues are essential for the binding of calcium. Decarboxylation promotes the hormone activity.

The protein localises to the secreted. Its function is as follows. The carboxylated form is one of the main organic components of the bone matrix, which constitutes 1-2% of the total bone protein: it acts as a negative regulator of bone formation and is required to limit bone formation without impairing bone resorption or mineralization. The carboxylated form binds strongly to apatite and calcium. The uncarboxylated form acts as a hormone secreted by osteoblasts, which regulates different cellular processes, such as energy metabolism, male fertility and brain development. Regulates of energy metabolism by acting as a hormone favoring pancreatic beta-cell proliferation, insulin secretion and sensitivity and energy expenditure. Uncarboxylated osteocalcin hormone also promotes testosterone production in the testes: acts as a ligand for G protein-coupled receptor GPRC6A at the surface of Leydig cells, initiating a signaling response that promotes the expression of enzymes required for testosterone synthesis in a CREB-dependent manner. Also acts as a regulator of brain development: osteocalcin hormone crosses the blood-brain barrier and acts as a ligand for GPR158 on neurons, initiating a signaling response that prevents neuronal apoptosis in the hippocampus, favors the synthesis of all monoamine neurotransmitters and inhibits that of gamma-aminobutyric acid (GABA). Osteocalcin also crosses the placenta during pregnancy and maternal osteocalcin is required for fetal brain development. This chain is Osteocalcin (BGLAP), found in Macaca fascicularis (Crab-eating macaque).